The following is a 280-amino-acid chain: Pantothenate synthetase (280 aa).

30–37 (MGYLHEGH) is an ATP binding site. The active-site Proton donor is the His37. Gln61 is a (R)-pantoate binding site. Position 61 (Gln61) interacts with beta-alanine. 147–150 (GQKD) is a binding site for ATP. Position 153 (Gln153) interacts with (R)-pantoate. ATP-binding positions include Val176 and 184 to 187 (MSSR).

This sequence belongs to the pantothenate synthetase family. As to quaternary structure, homodimer.

The protein resides in the cytoplasm. The enzyme catalyses (R)-pantoate + beta-alanine + ATP = (R)-pantothenate + AMP + diphosphate + H(+). Its pathway is cofactor biosynthesis; (R)-pantothenate biosynthesis; (R)-pantothenate from (R)-pantoate and beta-alanine: step 1/1. Catalyzes the condensation of pantoate with beta-alanine in an ATP-dependent reaction via a pantoyl-adenylate intermediate. The polypeptide is Pantothenate synthetase (Fervidobacterium nodosum (strain ATCC 35602 / DSM 5306 / Rt17-B1)).